The chain runs to 403 residues: DNA primase DnaG (403 aa).

The 77-residue stretch at 172–248 (DSVIIVEGRA…HIDYIARAPP (77 aa)) folds into the Toprim domain. Glu-178, Asp-222, and Asp-224 together coordinate Mg(2+). The disordered stretch occupies residues 279 to 300 (AAGEKTEAPAQPTQQQPPPAEA).

The protein belongs to the archaeal DnaG primase family. As to quaternary structure, forms a ternary complex with MCM helicase and DNA. Component of the archaeal exosome complex. It depends on Mg(2+) as a cofactor.

The enzyme catalyses ssDNA + n NTP = ssDNA/pppN(pN)n-1 hybrid + (n-1) diphosphate.. Its function is as follows. RNA polymerase that catalyzes the synthesis of short RNA molecules used as primers for DNA polymerase during DNA replication. Also part of the exosome, which is a complex involved in RNA degradation. Acts as a poly(A)-binding protein that enhances the interaction between heteromeric, adenine-rich transcripts and the exosome. The polypeptide is DNA primase DnaG (Pyrobaculum neutrophilum (strain DSM 2338 / JCM 9278 / NBRC 100436 / V24Sta) (Thermoproteus neutrophilus)).